The following is a 241-amino-acid chain: Probable 2-phosphosulfolactate phosphatase (241 aa).

Belongs to the ComB family. Mg(2+) serves as cofactor.

The enzyme catalyses (2R)-O-phospho-3-sulfolactate + H2O = (2R)-3-sulfolactate + phosphate. This is Probable 2-phosphosulfolactate phosphatase from Gloeothece citriformis (strain PCC 7424) (Cyanothece sp. (strain PCC 7424)).